Reading from the N-terminus, the 205-residue chain is Ephrin-A1 (205 aa).

Residues 1 to 18 form the signal peptide; it reads MEFLWAPLLGLCCSLAAA. Positions 19–151 constitute an Ephrin RBD domain; it reads DRHTVFWNSS…KLKVTVSGKI (133 aa). N-linked (GlcNAc...) asparagine glycosylation is present at asparagine 26. Cystine bridges form between cysteine 51-cysteine 92 and cysteine 80-cysteine 140. The GPI-anchor amidated serine moiety is linked to residue serine 182. A propeptide spans 183-205 (removed in mature form); that stretch reads AAPRLSPLAWAVLLLPFLLLQTS.

Belongs to the ephrin family. Monomer. Homodimer. Forms heterodimers with EPHA2. Binds to the receptor tyrosine kinases EPHA2, EPHA3, EPHA4, EPHA5, EPHA6 and EPHA7. Also binds with low affinity to EPHA1. Undergoes proteolysis by a metalloprotease to give rise to a soluble monomeric form. In terms of processing, N-Glycosylation is required for binding to EPHA2 receptor and inducing its internalization.

The protein resides in the cell membrane. It is found in the secreted. Its function is as follows. Cell surface GPI-bound ligand for Eph receptors, a family of receptor tyrosine kinases which are crucial for migration, repulsion and adhesion during neuronal, vascular and epithelial development. Binds promiscuously Eph receptors residing on adjacent cells, leading to contact-dependent bidirectional signaling into neighboring cells. Plays an important role in angiogenesis and tumor neovascularization. The recruitment of VAV2, VAV3 and PI3-kinase p85 subunit by phosphorylated EPHA2 is critical for EFNA1-induced RAC1 GTPase activation and vascular endothelial cell migration and assembly. Exerts anti-oncogenic effects in tumor cells through activation and down-regulation of EPHA2. Activates EPHA2 by inducing tyrosine phosphorylation which leads to its internalization and degradation. Acts as a negative regulator in the tumorigenesis of gliomas by down-regulating EPHA2 and FAK. Can evoke collapse of embryonic neuronal growth cone and regulates dendritic spine morphogenesis. In Sus scrofa (Pig), this protein is Ephrin-A1 (EFNA1).